Reading from the N-terminus, the 36-residue chain is Potassium channel toxin alpha-KTx 23.1 (36 aa).

Disulfide bonds link Cys6/Cys26, Cys12/Cys31, Cys16/Cys33, and Cys21/Cys36. Cys36 is subject to Cysteine amide.

Belongs to the short scorpion toxin superfamily. Potassium channel inhibitor family. Alpha-KTx 23 subfamily. As to expression, expressed by the venom gland.

It localises to the secreted. Voltage-gated potassium channel inhibitor. Selectively and irreversibly binds (K(d)=2.9 pM) and blocks hKv1.3/KCNA3 potassium channels of human T-lymphocytes. Weakly blocks hKCa3.1/KCNN4, mKv1.1/KCNA1, and hKv1.2/KCNA2 channels. In vivo, high doses (200 ug) produce no symptoms of intoxication when injected into mice. This Vaejovis mexicanus smithi (Mexican scorpion) protein is Potassium channel toxin alpha-KTx 23.1.